Here is a 452-residue protein sequence, read N- to C-terminus: Chromosomal replication initiator protein DnaA (452 aa).

The domain I, interacts with DnaA modulators stretch occupies residues 1–80; that stretch reads MSSTVSTLWR…NNDQFMVKIQ (80 aa). The segment at 80 to 114 is domain II; it reads QDGIKPTEKTTTNVEQKTQNENCHNEITSQQNYRS. A domain III, AAA+ region region spans residues 115 to 332; it reads YLNKNHVFDN…GALNRVHAHA (218 aa). ATP contacts are provided by G160, G162, K163, and T164. A domain IV, binds dsDNA region spans residues 333–452; that stretch reads EFTGKAITID…WSNLIRTLSV (120 aa).

Belongs to the DnaA family. Oligomerizes as a right-handed, spiral filament on DNA at oriC.

It is found in the cytoplasm. Its function is as follows. Plays an essential role in the initiation and regulation of chromosomal replication. ATP-DnaA binds to the origin of replication (oriC) to initiate formation of the DNA replication initiation complex once per cell cycle. Binds the DnaA box (a 9 base pair repeat at the origin) and separates the double-stranded (ds)DNA. Forms a right-handed helical filament on oriC DNA; dsDNA binds to the exterior of the filament while single-stranded (ss)DNA is stabiized in the filament's interior. The ATP-DnaA-oriC complex binds and stabilizes one strand of the AT-rich DNA unwinding element (DUE), permitting loading of DNA polymerase. After initiation quickly degrades to an ADP-DnaA complex that is not apt for DNA replication. Binds acidic phospholipids. This chain is Chromosomal replication initiator protein DnaA, found in Histophilus somni (strain 129Pt) (Haemophilus somnus).